The primary structure comprises 215 residues: Probable phosphoglycerate mutase GpmB (215 aa).

Substrate is bound by residues 8–15 (RHGETEWN), 21–22 (QG), Arg-58, 82–85 (ELDM), and 151–152 (GI). The Tele-phosphohistidine intermediate role is filled by His-9. Residue Glu-82 is the Proton donor/acceptor of the active site.

The protein belongs to the phosphoglycerate mutase family. GpmB subfamily.

It catalyses the reaction (2R)-2-phosphoglycerate = (2R)-3-phosphoglycerate. Its pathway is carbohydrate degradation; glycolysis; pyruvate from D-glyceraldehyde 3-phosphate: step 3/5. This chain is Probable phosphoglycerate mutase GpmB, found in Proteus mirabilis (strain HI4320).